The primary structure comprises 699 residues: Elongation factor G (699 aa).

Residues Asn-10–Thr-292 enclose the tr-type G domain. Residues Ala-19–Thr-26, Asp-90–His-94, and Asn-144–Asp-147 contribute to the GTP site. Positions Thr-292–Ser-312 are disordered.

It belongs to the TRAFAC class translation factor GTPase superfamily. Classic translation factor GTPase family. EF-G/EF-2 subfamily.

Its subcellular location is the cytoplasm. In terms of biological role, catalyzes the GTP-dependent ribosomal translocation step during translation elongation. During this step, the ribosome changes from the pre-translocational (PRE) to the post-translocational (POST) state as the newly formed A-site-bound peptidyl-tRNA and P-site-bound deacylated tRNA move to the P and E sites, respectively. Catalyzes the coordinated movement of the two tRNA molecules, the mRNA and conformational changes in the ribosome. The chain is Elongation factor G from Coxiella burnetii (strain CbuG_Q212) (Coxiella burnetii (strain Q212)).